Reading from the N-terminus, the 242-residue chain is Octanoyltransferase (242 aa).

The 176-residue stretch at 31–206 folds into the BPL/LPL catalytic domain; it reads SQTTDEIWFL…LFLKNFGYNQ (176 aa). Substrate-binding positions include 70–77, 137–139, and 150–152; these read RGGQVTYH, SIG, and GLA. Cys-168 (acyl-thioester intermediate) is an active-site residue.

It belongs to the LipB family.

The protein resides in the cytoplasm. The enzyme catalyses octanoyl-[ACP] + L-lysyl-[protein] = N(6)-octanoyl-L-lysyl-[protein] + holo-[ACP] + H(+). It participates in protein modification; protein lipoylation via endogenous pathway; protein N(6)-(lipoyl)lysine from octanoyl-[acyl-carrier-protein]: step 1/2. Catalyzes the transfer of endogenously produced octanoic acid from octanoyl-acyl-carrier-protein onto the lipoyl domains of lipoate-dependent enzymes. Lipoyl-ACP can also act as a substrate although octanoyl-ACP is likely to be the physiological substrate. The chain is Octanoyltransferase from Coxiella burnetii (strain RSA 493 / Nine Mile phase I).